The following is a 168-amino-acid chain: Peptide deformylase 2 (168 aa).

Residues Cys91 and His133 each coordinate Fe cation. The active site involves Glu134. His137 lines the Fe cation pocket.

The protein belongs to the polypeptide deformylase family. Requires Fe(2+) as cofactor.

It catalyses the reaction N-terminal N-formyl-L-methionyl-[peptide] + H2O = N-terminal L-methionyl-[peptide] + formate. Its function is as follows. Removes the formyl group from the N-terminal Met of newly synthesized proteins. Requires at least a dipeptide for an efficient rate of reaction. N-terminal L-methionine is a prerequisite for activity but the enzyme has broad specificity at other positions. In Vibrio cholerae serotype O1 (strain ATCC 39315 / El Tor Inaba N16961), this protein is Peptide deformylase 2.